The primary structure comprises 498 residues: Glutamate--tRNA ligase (498 aa).

Positions 10 to 20 (PSPTGYFHIGG) match the 'HIGH' region motif. A 'KMSKS' region motif is present at residues 252-256 (KLSKR). An ATP-binding site is contributed by lysine 255.

The protein belongs to the class-I aminoacyl-tRNA synthetase family. Glutamate--tRNA ligase type 1 subfamily. Monomer.

It is found in the cytoplasm. It carries out the reaction tRNA(Glu) + L-glutamate + ATP = L-glutamyl-tRNA(Glu) + AMP + diphosphate. Functionally, catalyzes the attachment of glutamate to tRNA(Glu) in a two-step reaction: glutamate is first activated by ATP to form Glu-AMP and then transferred to the acceptor end of tRNA(Glu). The sequence is that of Glutamate--tRNA ligase from Mycoplasmoides gallisepticum (strain R(low / passage 15 / clone 2)) (Mycoplasma gallisepticum).